The sequence spans 340 residues: PI-PLC X domain-containing protein 2 (340 aa).

In terms of domain architecture, PI-PLC X-box spans 42-215; sequence HLHNVPLSNL…KYQVLIFYHC (174 aa). Active-site residues include His57 and His132.

Expressed at highest levels in brain, followed by stomach and small intestine. Detected at low levels in kidney, ey, thymus and slkeletal muscle.

It localises to the nucleus. It carries out the reaction a 1,2-diacyl-sn-glycero-3-phospho-(1D-myo-inositol) + H2O = 1D-myo-inositol 1-phosphate + a 1,2-diacyl-sn-glycerol + H(+). Its function is as follows. Catalyzes the hydrolysis of inositol from phosphatidylinositol (1,2-diacyl-sn-glycero-3-phospho-(1D-myo-inositol), PI). Could also hydrolyze various multi-phosphorylated derivatives of PI, such as phosphatidylinositol-4,5 bisphosphate (PIP2), releasing inositol-1,4,5-trisphosphate (IP3) and the protein kinase C activator diacylglycerol (DAG), therefore mediating cell signaling. The protein is PI-PLC X domain-containing protein 2 (Plcxd2) of Mus musculus (Mouse).